A 485-amino-acid polypeptide reads, in one-letter code: Adenosylhomocysteinase (485 aa).

Residues Thr64, Asp139, and Glu205 each contribute to the substrate site. NAD(+) is bound at residue 206 to 208 (TTT). Residues Lys235 and Asp239 each coordinate substrate. Residues Asn240, 269-274 (GYGDVG), Glu292, Asn327, and 348-350 (IGH) contribute to the NAD(+) site.

The protein belongs to the adenosylhomocysteinase family. Homotetramer. NAD(+) is required as a cofactor.

The catalysed reaction is S-adenosyl-L-homocysteine + H2O = L-homocysteine + adenosine. The protein operates within amino-acid biosynthesis; L-homocysteine biosynthesis; L-homocysteine from S-adenosyl-L-homocysteine: step 1/1. Functionally, adenosylhomocysteine is a competitive inhibitor of S-adenosyl-L-methionine-dependent methyl transferase reactions; therefore adenosylhomocysteinase may play a key role in the control of methylations via regulation of the intracellular concentration of adenosylhomocysteine. This chain is Adenosylhomocysteinase (SAHH), found in Mesembryanthemum crystallinum (Common ice plant).